The primary structure comprises 361 residues: Ribosomal RNA large subunit methyltransferase M (361 aa).

Residues S187, 220-223, D239, D259, and D276 each bind S-adenosyl-L-methionine; that span reads CPGG. K305 serves as the catalytic Proton acceptor.

This sequence belongs to the class I-like SAM-binding methyltransferase superfamily. RNA methyltransferase RlmE family. RlmM subfamily. Monomer.

It localises to the cytoplasm. It carries out the reaction cytidine(2498) in 23S rRNA + S-adenosyl-L-methionine = 2'-O-methylcytidine(2498) in 23S rRNA + S-adenosyl-L-homocysteine + H(+). Functionally, catalyzes the 2'-O-methylation at nucleotide C2498 in 23S rRNA. The sequence is that of Ribosomal RNA large subunit methyltransferase M from Shewanella sp. (strain ANA-3).